We begin with the raw amino-acid sequence, 276 residues long: Rhomboid protease GlpG (276 aa).

A run of 6 helical transmembrane segments spans residues 94–114 (GPVT…MQIL), 142–162 (ALMH…WYLG), 169–189 (LGSG…GYVQ), 192–212 (FSGP…GYVW), 229–249 (LIIF…GMSM), and 250–270 (ANGA…VDSL). Catalysis depends on Ser-201, which acts as the Nucleophile. His-254 is an active-site residue.

This sequence belongs to the peptidase S54 family.

The protein localises to the cell inner membrane. The enzyme catalyses Cleaves type-1 transmembrane domains using a catalytic dyad composed of serine and histidine that are contributed by different transmembrane domains.. Functionally, rhomboid-type serine protease that catalyzes intramembrane proteolysis. The polypeptide is Rhomboid protease GlpG (Escherichia coli O81 (strain ED1a)).